We begin with the raw amino-acid sequence, 400 residues long: Subtilisin-like protease 7 (400 aa).

Positions 1–20 (MGFITKAIPLALAAMSVVNG) are cleaved as a signal peptide. Positions 21–119 (AEILETRAGV…IERDARVQIN (99 aa)) are excised as a propeptide. The 83-residue stretch at 36–118 (KYIVIMNDGV…YIERDARVQI (83 aa)) folds into the Inhibitor I9 domain. Residues 129–400 (SWGLARVGSR…GKLINNGSGK (272 aa)) enclose the Peptidase S8 domain. Catalysis depends on charge relay system residues D161 and H192. N-linked (GlcNAc...) asparagine glycans are attached at residues N222 and N252. S346 serves as the catalytic Charge relay system. Residue N396 is glycosylated (N-linked (GlcNAc...) asparagine).

This sequence belongs to the peptidase S8 family.

Its subcellular location is the secreted. Functionally, secreted subtilisin-like serine protease with keratinolytic activity that contributes to pathogenicity. The chain is Subtilisin-like protease 7 (SUB7) from Arthroderma otae (strain ATCC MYA-4605 / CBS 113480) (Microsporum canis).